The chain runs to 686 residues: X-linked interleukin-1 receptor accessory protein-like 2 (686 aa).

An N-terminal signal peptide occupies residues 1–16 (MKLPLLLALVVCSAVS). The Extracellular segment spans residues 17–354 (TNLKMVSKRN…LLRKKDLIYK (338 aa)). Residues 32 to 132 (IDWSVDLKTY…YCMKVSMSLT (101 aa)) enclose the Ig-like C2-type 1 domain. A disulfide bridge connects residues cysteine 53 and cysteine 116. N-linked (GlcNAc...) asparagine glycosylation is found at asparagine 63, asparagine 120, asparagine 136, asparagine 211, and asparagine 328. 2 Ig-like C2-type domains span residues 141–232 (CYNS…LKVT) and 239–347 (PPKP…VLLR). Cystine bridges form between cysteine 162/cysteine 214 and cysteine 265/cysteine 331. The helical transmembrane segment at 355–375 (IELAGGLGAIFLLLILLLVVY) threads the bilayer. The Cytoplasmic portion of the chain corresponds to 376–686 (KCYNIELMLF…KELSFTSDIW (311 aa)). A TIR domain is found at 400-556 (KEYDAYLSYT…KFWKHLVYEM (157 aa)). The active site involves glutamate 488.

It belongs to the interleukin-1 receptor family. Detected in fetal brain after day 12.5, in particular in parts of the diencephalon and in the basal plate of the spinal cord. In postnatal brain detected in cerebral cortex, olfactory bulb, in the CA1 region of the hippocampus and in Purkinje cells of the Xth cerebellar lobule.

It localises to the membrane. It carries out the reaction NAD(+) + H2O = ADP-D-ribose + nicotinamide + H(+). The chain is X-linked interleukin-1 receptor accessory protein-like 2 (Il1rapl2) from Mus musculus (Mouse).